A 147-amino-acid chain; its full sequence is Allograft inflammatory factor 1 (147 aa).

Position 2 is an N-acetylserine (Ser2). Lys11 carries the N6-acetyllysine modification. Phosphoserine is present on Ser39. Residues 45–80 form the EF-hand 1 domain; that stretch reads SKLEGFKEKYMEFDLNGNGDIDIMSLKRMLEKLGVP. Residues Asp58, Asn60, Asn62, Asp64, Thr100, and Asp105 each contribute to the Ca(2+) site. Residues 81–115 enclose the EF-hand 2; degenerate domain; the sequence is KTHLELKKLIGEVSSGSGETFSYPDFLRMMLGKRS. Residues 128–147 form a disordered region; it reads AREKEKPTGPPAKKAISELP.

As to quaternary structure, homodimer (Potential). Monomer. Interacts with LCP1. In terms of processing, phosphorylated on serine residues. In terms of tissue distribution, detected in T-lymphocytes and peripheral blood mononuclear cells.

The protein localises to the cytoplasm. It localises to the cytoskeleton. Its subcellular location is the cell projection. The protein resides in the ruffle membrane. It is found in the phagocytic cup. Its function is as follows. Actin-binding protein that enhances membrane ruffling and RAC activation. Enhances the actin-bundling activity of LCP1. Binds calcium. Plays a role in RAC signaling and in phagocytosis. May play a role in macrophage activation and function. Promotes the proliferation of vascular smooth muscle cells and of T-lymphocytes. Enhances lymphocyte migration. Plays a role in vascular inflammation. This Homo sapiens (Human) protein is Allograft inflammatory factor 1 (AIF1).